The chain runs to 62 residues: Alpha-conotoxin-like Bn1.3 (62 aa).

The signal sequence occupies residues Met1 to Ala18. Positions Val19–Arg48 are excised as a propeptide. 2 disulfide bridges follow: Cys51–Cys57 and Cys52–Cys61. At Cys61 the chain carries Cysteine amide.

The protein belongs to the conotoxin A superfamily. Expressed by the venom duct.

The protein localises to the secreted. Does not show activity on the acetylcholine receptors tested. This is Alpha-conotoxin-like Bn1.3 from Conus bandanus (Banded marble cone).